Here is a 906-residue protein sequence, read N- to C-terminus: Disintegrin and metalloproteinase domain-containing protein 22 (906 aa).

A signal peptide spans 1–25; the sequence is MQAAVAVSVPFLLLCVLGTCPPARC. Positions 26-222 are excised as a propeptide; it reads GQAGDASLME…KFILKPRPKR (197 aa). The N-linked (GlcNAc...) asparagine glycan is linked to N175. Residues 223–736 are Extracellular-facing; sequence SKRQLRRYPR…LSGNGVAGTN (514 aa). Residues 239-438 form the Peptidase M12B domain; the sequence is KYIELMIVND…GGGACLFNKP (200 aa). Disulfide bonds link C349–C433, C392–C417, C394–C401, C447–C477, C458–C474, C460–C466, C473–C494, C485–C491, C490–C516, C503–C523, C510–C542, C535–C547, C554–C605, C569–C635, C583–C593, C600–C663, and C657–C668. The Disintegrin domain maps to 444–531; that stretch reads PPECGNGFIE…QCAPNIHKMD (88 aa). N519 is a glycosylation site (N-linked (GlcNAc...) asparagine). The N-linked (GlcNAc...) asparagine glycan is linked to N634. The N-linked (GlcNAc...) asparagine glycan is linked to N675. The region spanning 675–712 is the EGF-like domain; it reads NFSTCLSSKEGTICSGNGVCSNELKCVCNRHWIGSDCN. Disulfide bonds link C679–C694, C688–C700, and C702–C711. A helical transmembrane segment spans residues 737-757; the sequence is IIIGIIAGTILVLALILGITA. At 758 to 906 the chain is on the cytoplasmic side; it reads WGYKNYREQR…QSARLWETSI (149 aa). The interval 785 to 906 is disordered; it reads YSDIPPGVST…QSARLWETSI (122 aa). A compositionally biased stretch (low complexity) spans 793–810; that stretch reads STNSASSSKKRSNGLSHS. S810 is modified (phosphoserine). Residues 811–829 are compositionally biased toward basic and acidic residues; sequence WSERIPDTKHISDICENGR. S834 carries the post-translational modification Phosphoserine. Over residues 842–853 the composition is skewed to basic residues; that stretch reads NKKKIRGKRFRP. 4 positions are modified to phosphoserine: S857, S862, S866, and S870. Residues 862-877 show a composition bias toward low complexity; the sequence is SPAKSPSSSTGSIASS.

Interacts with LGI1. Interacts with DLG4/PSD95. Also binds LGI4. Interacts with KCNA2 and DLG2. Interacts with ADAM11. Interacts (via C-terminus) with YWHAB/14-3-3 beta. Interacts (via C-terminus) with YWHAZ/14-3-3 zeta. The precursor is cleaved by a furin endopeptidase. Highly expressed in the brain and in some high-grade but not low-grade gliomas. Detected slightly or not at all in other tissues.

It localises to the cell membrane. The protein resides in the cell projection. Its subcellular location is the axon. Its function is as follows. Probable ligand for integrin in the brain. This is a non catalytic metalloprotease-like protein. Involved in regulation of cell adhesion and spreading and in inhibition of cell proliferation. Neuronal receptor for LGI1. The polypeptide is Disintegrin and metalloproteinase domain-containing protein 22 (ADAM22) (Homo sapiens (Human)).